The primary structure comprises 217 residues: Dephospho-CoA kinase (217 aa).

One can recognise a DPCK domain in the interval 2–217; that stretch reads VIGLTGGIAS…RELARIEEQK (216 aa). ATP is bound at residue 10–15; it reads ASGKST.

It belongs to the CoaE family.

The protein localises to the cytoplasm. It carries out the reaction 3'-dephospho-CoA + ATP = ADP + CoA + H(+). Its pathway is cofactor biosynthesis; coenzyme A biosynthesis; CoA from (R)-pantothenate: step 5/5. Its function is as follows. Catalyzes the phosphorylation of the 3'-hydroxyl group of dephosphocoenzyme A to form coenzyme A. In Lactococcus lactis subsp. lactis (strain IL1403) (Streptococcus lactis), this protein is Dephospho-CoA kinase.